The sequence spans 122 residues: Large ribosomal subunit protein uL18 (122 aa).

It belongs to the universal ribosomal protein uL18 family. In terms of assembly, part of the 50S ribosomal subunit; part of the 5S rRNA/L5/L18/L25 subcomplex. Contacts the 5S and 23S rRNAs.

In terms of biological role, this is one of the proteins that bind and probably mediate the attachment of the 5S RNA into the large ribosomal subunit, where it forms part of the central protuberance. This chain is Large ribosomal subunit protein uL18, found in Fervidobacterium nodosum (strain ATCC 35602 / DSM 5306 / Rt17-B1).